Reading from the N-terminus, the 437-residue chain is Putative O-antigen export protein (437 aa).

Transmembrane regions (helical) follow at residues 3–23 (VPTH…SIFI), 41–61 (AVFT…FGLG), 81–101 (LVLS…ILIL), 129–149 (VASF…IWFS), 152–172 (KGWV…VFLM), 185–205 (IIFS…ISTL), 231–251 (GGFF…YIVM), 269–289 (TFGL…PVCA), 310–330 (FGFI…DFIV), 332–352 (ILAP…FSFY), 375–395 (LWIS…VGAV), and 398–418 (GLVG…SWWL).

It localises to the cell inner membrane. It participates in bacterial outer membrane biogenesis; LPS O-antigen biosynthesis. May be involved in the translocation process of the nascent O-polysaccharide molecules and/or its ligation to lipid A core units. This Yersinia pseudotuberculosis protein is Putative O-antigen export protein (rfbX).